The following is a 63-amino-acid chain: Juvenile hormone esterase, isoform B (63 aa).

N-linked (GlcNAc...) asparagine glycosylation is present at Asn20.

This sequence belongs to the type-B carboxylesterase/lipase family. As to expression, fat body, the site of their biosynthesis, and the hemolymph where it is secreted.

The enzyme catalyses juvenile hormone I + H2O = juvenile hormone I carboxylate + methanol + H(+). It carries out the reaction juvenile hormone III + H2O = juvenile hormone III carboxylate + methanol + H(+). JH esterase plays a crucial role in the decrease of JH activity in lepidopteran insects, by hydrolyzing the methyl ester of JH. It is also involved in the transport of JH. In Trichoplusia ni (Cabbage looper), this protein is Juvenile hormone esterase, isoform B.